The sequence spans 88 residues: Small ribosomal subunit protein bS20 (88 aa).

The tract at residues 1–27 (MANSKSAKKRALQSEKRRQHNASRRSM) is disordered.

Belongs to the bacterial ribosomal protein bS20 family.

Its function is as follows. Binds directly to 16S ribosomal RNA. The protein is Small ribosomal subunit protein bS20 of Shewanella putrefaciens (strain CN-32 / ATCC BAA-453).